The primary structure comprises 4328 residues: MKKHRVFHLFLLIFCKAISLVTTSSSTEQIFEFTAPLYNLSVEENSIGSKYARSENSTKIGVPLPEKDANCKFRVAEIVGEKSSLFKAHSRQVGDFVFLRIRYKGDNPLNRELKDFYDILVKAMCKRRDLSNLETTARIHLRVIDRNDASPVFLVGEQGYEAEIDDDLEPFSTVLRVEASDADIGINSAIYFSLVNRSHDFIVEPVTGWVRSLRHVKPGKYSLKVKSEDRASRLYYFDENEVQPSWTADVLITVRETKPKPRRILVDQRKINPNILNNRQLAAIITLKDSPNDAIVGLKGNEKEHWFEVEPEVVGNDGTKELRWMLYAKNGSQVPKNTNVTLTIGEDYIRRSGFSISKKPVIPTNETVTIQIERLAEHLIRFLDNEKLTLKTDEMAPIGRILYRMNVNVENPDDVSLIRYSLEYSKSDLPNATLPFAIGSKNGILRVSAKINRSERVYNFKVIASLHGINEKLAEKDVSIEILDSNDHAPVFSAKWMRQTPIVIGKPGDVLVKVDATDQDEGENGKIVYKFTSELPLEINANTGEITLVEVPKKGNSWPATVWAIDLGLPLSRMSALNLMFYKNGTKIPAKPKPIIIQESENKHSPVFSSFPEIVEVTEDAPIGTVVAKLQANDEDTGYNGFIRYVIHDIAGSSHEVLTVDEQSGEITVASDLSKLMKEKLEVLDVQLKVSAIDAGTPVKSSVKTMKLRIKDVNNHSPQFDEVSYYLRISENEKPGKDIFKVTANDFDGGNNGKIKFSLGNNQEKSSVISIDAKTGIVKLLKSLDREDQDVHTFAIIASDEGFPMRVSVTNLTISVEDVNDNPPKCVVQHSRARIPEDLPHGAFVSCMAAFDEDIGQNSKLKFLLNSEKVPFRIDHHSGCIFIHAPEYPLDYHKTPFFNLSIEVADHGDPILSTSCHLHVELVDIAHNHLAIEFDDVAKEASVYENSEIGTEVIMIEAKETGDEQKVKAENLEYRIIGGDGWPHFSIDQKGTVRTTHLLDRETKSAYWITVEARDSKTDLYKDPRRRDVLHVFIRILDRNDHRPVAKKPMYIASVAENSPANVVIVKVEATDADDVDNDAAAPLMFKIERGDPQSFFRIDLTSGYITTSGIRRLDREKQSEHELWVSICDGGEPQLCSNVIVIVNVLDENDNSPTFTQAIHHYSVRSKFAGKLCRIFAVDADEGENARLTYNITEGDARFSIDNNGNIIASEAIHGDESYALTVQATDHGTPGQQFAATRVVLTANSAGQKPRKSKNSPPEISGKKSDYVIPISDADQVGLTVGKLEASDADGDELWWSISSGDPDSVFDVRQDTGQLLLAKKVELLKRGELRLNISVTDGQAWDHSTVIIQVSRQISQRPKFSASHYQTDVSERVAVGTQIYTLKASGESLGTKPLVFNLFSVDDVAMEDKIRVEPSSGNVIVMEPLDYEAARRIRAVVQVQQANMKSFATFSVNINDENDNSPYFVGHTAFAFVDESDTVDDVLATVTAFDKDRGENGIVTYSIVSGNEESLFKIDAKSGEVRLAKPLDPELQHVESILRIRAIDSAANSLKDEMSLHIRNSNEAPETAKFDRKVYQTTLYDSTRPGTPVLVLNALHHGTVSYKLEPNCTFFEVHTLSGAVHLATWLTKLKHRKSVECTAIVESTEGQQDIAKVIAKIIRTNQHSPIFRRQVYRGTIRENMPTGSSVLSKSLLPLVVSAIDEDPGSNGLVGYRMLSPKDEQMFSVDQYSGAIRTQMSFDFEKMKEYSFYVQAFDMGQPPRRSLMPSLIVVTVIDENDEPPRFPSNSLDISMILPTANGVSVGGQTAQDMDSVGSLRYFIKDQSVPFSVDSKTGDVLVKDSNGISDMTKLFDLEVFVTDGKQSASYVMKISTISTENSKFKFTRNEYHTSLIENTTLPPGSIILSVATIGDKLDHFSIVNPHEAFFIHPGTGVISSSGIALDREKSAIIRLVVQAKSHEKNPVMARALVVVGIENINDETPIFMGTPYDITIGHSDIGTVVLEPKVIDNDEGDVVTISSENMPEYFKIVGGKVVLGKKLPSIEEEDLEFNFKLIAKDNGSVHRVEEPVKIRVVDKARPVFSQNVYTAVISKESTKKSTVLVKVMAKSSLQSKSKGLIGYRILDKKSPFSVDFLTGEVRLNNLKMLAETNYTFEVEAREVTRPKMIAKAQVEIIVKSGITTHAPVFEKLKYTASTPESTSIGQRLLTIKATTSDENDTIEYSLSGSKDIEIHPETGDVTITGQLDYEKTQKYDLKLVATSSGKQVSSEAEFIVLIEDVNDEMPEFIRSDVSAKISDSAITGQFITIMSATDMDTTNSLDEESQKLLYKIVDGDETLFNISPATGELSLARPVEQDDLVNEDTKKVLNVSVTDGMFTAYAKLVVEILRSGSMQPPPRFEQSHYVANALENTIVNKSALLTVAVKGGVPPLQFSLAPTTSSNSSTSKEAWPVAIDRKTGRIHVSRVLNYHRDKRYQIPLVVEDATGRRAFSTLTLSVIDINDKPPFFVLPFYSTSISESAKEGDTVMMVSATDDDENDTIEYSLLDGSESQFFSVHPRQGTITVAKKLEHKAGVTLSLTIKATDSANPPHHATTTVEVNIASESVKVPRFSNSHYLFSVMEDADVGNVIGRVQQMETEIDEIRFTIVPGSEESDSFLPFSVERSTGKIIVKSSLDRERKNQWKMTIRADAAGGVHAITTVTVDIGDVNDNAPAFHGDYERFTISEDAAVGTSVTIFSAMDRDDSPSGRIRFSLVEENPYFDLNENSGWLTVASQLDREKIDHYKLIARATDEGGFNTDLPFTIVVSDVNDSPPQFEKEEFNIDLHLPSTSPILHFSIKDDDLSPNNVSQFFIPKGNEEGVFWIDSNNDLLLKRPEIVENKMQYQLKVTAFDGVFETSTKVKINLKSSKDSDIRCPEANKTVILAENSKKGTVVLGESSLLGPNVTFKLSDNDGNVFVVNFRNGIVKVKESDQIDYEKNQQLEFHRLTIQDNSEVCKELITVVIENLNDNRPKIIEKLLKVSIDENLPTSEDARQYITRIVAEDADFDEIKFRMVDDFGGLFQIDDINGVVTVVKPLDSEILGFFNLTVVASDGEFEDKATILVTVIDQNDNAPTFEKSTYSMKVMESESIGYELAHFRASGGDQNETIEYYLKPSDVTSFVNLNAQTGILTLAKPLDFETLSALKLTVVAKDSGVPPLETEAQVEISVMDENDNAPKFEKEKYVGKVKENSKSGEKVLTVKALDVDSEHFGAVSYELEIVSETTTDTPVLPFAINSNGDVLISQSIDYEKIKKYNLKVIAKDGGRPPLRSEALLEIHVEDENDHAPTFDDCNMTALVQEGEAIGHRLLKFSVSDLDGPKNGAPFTVEIQGDGAKSFKVNEKLELLTAKKLEYRKKDKYLLTVIAKDVKGKTTDCPLTIFIRQTSRHAPTMKPMKIQINTLQNELPEGIIGRLKASDEDEEDQNGLLRFGLVEGSIQSPRAQVQESRSTHLFRVDPNTGDIWSDHSITQGLHTFNVTVTDSKFNTVSYVEVHVTSIDNDVIDHAVSIRIRSMSVDEFMRKHVKEFRRIISHHLNLNDDSSIQLISVQAVPSTESERRSRRNSMEDVEILMTAQRGLGRGYLKPDHIYSRLKNDFQNMNDQSQRMRYQLITEMCTTGVCLRGECREVIELIEDSWTKVSTDDFSFVSPFHSRSAQCLCPDGFGGKRCEVETNQCAKSPCEQWQLCIPSVHNSTYECVCPLGMEGDKCSVPSCQNDGKCLEEAELSVGGDGYFEISLSNEIETRMELEIELKTTTHNGIIMWSRGKRDFHMLRLVNGTPEYHWNAGTGTGIVTSKTSVVDGQWHRIAISRRQRRTRMTVDDEDLQEAFSPIGSTVINLHRYSQKLVLGAKVDDGELTDGVSACFRTISVDGMKVLKTRQGMKLFGAQPGCSALTSSPCNDLPCQHAGTCISQGKSHFKCECPSRYSGNVCEIDLEPCASSPCPTGIQCIPFYNDYLCKCPNGFTGKHCEARGFEDHETSSCSKNVCGTSGQCISIPRHSLESSDFICNCTGGILQSTPCAEKSDILSTVLEFLLKAEIVIVILGVLLLLLVFCLTFITWKCCKKNRDPKYGAHCDVPHMRNTRVLVPVVPPPLPPRGFRNDSSNFISTSSVTTSHRPMVQVKPYSSDIRDSRSPSACGSSKGTRRDPLPSDKFRRVDETANRIRHSDRKDPRGDVLSSLRDSSDEWMGIDDRIDSSLKYSRAAAGTVIVGDTELMPVINDNDYMTMKPRKDKNFEREKPPAIPAHATPLESVLKLGSSSSGEEAPRNALYDDPISLDSQTFDDIDEEVNIHIS.

An N-terminal signal peptide occupies residues 1–23 (MKKHRVFHLFLLIFCKAISLVTT). Topologically, residues 24 to 4072 (SSSTEQIFEF…TVLEFLLKAE (4049 aa)) are extracellular. 2 N-linked (GlcNAc...) asparagine glycosylation sites follow: Asn39 and Asn56. 2 consecutive Cadherin domains span residues 108–153 (PLNR…SPVF) and 156–275 (GEQG…NPNI). N-linked (GlcNAc...) asparagine glycosylation is found at Asn196, Asn330, Asn339, Asn365, Asn431, Asn452, and Asn584. Cadherin domains lie at 384 to 492 (DNEK…APVF), 507 to 608 (PGDV…SPVF), 609 to 720 (SSFP…SPQF), 721 to 826 (DEVS…PPKC), 827 to 934 (VVQH…AIEF), 935 to 1051 (DDVA…KPMY), 1047 to 1156 (KKPM…SPTF), 1175 to 1262 (RIFA…PPEI), 1265 to 1363 (KKSD…RPKF), 1364 to 1467 (SASH…SPYF), and 1476 to 1570 (VDES…APET). Asn811 and Asn899 each carry an N-linked (GlcNAc...) asparagine glycan. Residues 1090-1092 (RGD) carry the Cell attachment site motif. The N-linked (GlcNAc...) asparagine glycan is linked to Asn1192. Residues 1246 to 1267 (NSAGQKPRKSKNSPPEISGKKS) form a disordered region. The N-linked (GlcNAc...) asparagine glycan is linked to Asn1335. Asn1610 carries an N-linked (GlcNAc...) asparagine glycan. The Cadherin 14 domain maps to 1671 to 1784 (RRQVYRGTIR…IDENDEPPRF (114 aa)). Asn1895 carries an N-linked (GlcNAc...) asparagine glycan. The 68-residue stretch at 1917–1984 (FSIVNPHEAF…ENINDETPIF (68 aa)) folds into the Cadherin 15 domain. N-linked (GlcNAc...) asparagine glycans are attached at residues Asn2059, Asn2150, Asn2216, Asn2367, Asn2413, Asn2440, and Asn2535. Cadherin domains lie at 2187–2285 (EKLK…MPEF) and 2286–2397 (IRSD…PPRF). 9 Cadherin domains span residues 2429–2505 (LQFS…PPFF), 2506–2608 (VLPF…VPRF), 2609–2712 (SNSH…APAF), 2719–2813 (FTIS…PPQF), 2828–2915 (SPIL…CPEA), 2913–3011 (PEAN…RPKI), 3012–3113 (IEKL…APTF), 3114–3216 (EKST…APKF), and 3217–3326 (EKEK…APTF). Residues Asn2844, Asn2916, Asn2941, Asn3083, and Asn3143 are each glycosylated (N-linked (GlcNAc...) asparagine). Asn3330 carries an N-linked (GlcNAc...) asparagine glycan. Cadherin domains lie at 3335–3428 (VQEG…APTM) and 3429–3554 (KPMK…VDEF). An N-linked (GlcNAc...) asparagine glycan is attached at Asn3512. One can recognise an EGF-like 1 domain in the interval 3706–3744 (ETNQCAKSPCEQWQLCIPSVHNSTYECVCPLGMEGDKCS). 10 disulfide bridges follow: Cys3710–Cys3721, Cys3715–Cys3732, Cys3734–Cys3743, Cys3898–Cys3925, Cys3933–Cys3944, Cys3938–Cys3954, Cys3956–Cys3965, Cys3972–Cys3983, Cys3977–Cys3992, and Cys3994–Cys4003. Asn3727 carries N-linked (GlcNAc...) asparagine glycosylation. The Laminin G-like domain occupies 3757–3925 (EAELSVGGDG…MKLFGAQPGC (169 aa)). 2 consecutive EGF-like domains span residues 3929 to 3966 (TSSP…NVCE) and 3968 to 4004 (DLEP…KHCE). Asn4043 carries N-linked (GlcNAc...) asparagine glycosylation. A helical transmembrane segment spans residues 4073 to 4093 (IVIVILGVLLLLLVFCLTFIT). Topologically, residues 4094-4328 (WKCCKKNRDP…IDEEVNIHIS (235 aa)) are cytoplasmic. 2 disordered regions span residues 4143-4215 (TSSV…SSLR) and 4268-4311 (NFER…PISL). The span at 4178-4196 (TRRDPLPSDKFRRVDETAN) shows a compositional bias: basic and acidic residues. A Cell attachment site motif is present at residues 4207–4209 (RGD).

In terms of tissue distribution, in larvae and adult, it is expressed in various tissues including pharyngeal muscle, hypodermis and gonad. In the nervous system it is expressed in sensory neurons and motor neurons in the ventral cord.

The protein resides in the cell membrane. Its function is as follows. Potential calcium-dependent cell-adhesion protein that controls axon guidance in the ventral cord. This is Cadherin-4 from Caenorhabditis elegans.